The following is a 757-amino-acid chain: Xaa-Pro dipeptidyl-peptidase (757 aa).

Residues Ser348, Asp468, and His498 each act as charge relay system in the active site.

Belongs to the peptidase S15 family. As to quaternary structure, homodimer.

The protein localises to the cytoplasm. The catalysed reaction is Hydrolyzes Xaa-Pro-|- bonds to release unblocked, N-terminal dipeptides from substrates including Ala-Pro-|-p-nitroanilide and (sequentially) Tyr-Pro-|-Phe-Pro-|-Gly-Pro-|-Ile.. In terms of biological role, removes N-terminal dipeptides sequentially from polypeptides having unsubstituted N-termini provided that the penultimate residue is proline. The sequence is that of Xaa-Pro dipeptidyl-peptidase from Streptococcus pneumoniae (strain P1031).